A 353-amino-acid polypeptide reads, in one-letter code: Beta-hexosaminidase (353 aa).

Residues D74, R82, R149, and 179-180 (KH) each bind substrate. H192 (proton donor/acceptor) is an active-site residue. Residue D263 is the Nucleophile of the active site.

Belongs to the glycosyl hydrolase 3 family. NagZ subfamily.

It is found in the cytoplasm. It catalyses the reaction Hydrolysis of terminal non-reducing N-acetyl-D-hexosamine residues in N-acetyl-beta-D-hexosaminides.. It functions in the pathway cell wall biogenesis; peptidoglycan recycling. In terms of biological role, plays a role in peptidoglycan recycling by cleaving the terminal beta-1,4-linked N-acetylglucosamine (GlcNAc) from peptide-linked peptidoglycan fragments, giving rise to free GlcNAc, anhydro-N-acetylmuramic acid and anhydro-N-acetylmuramic acid-linked peptides. The sequence is that of Beta-hexosaminidase from Bordetella bronchiseptica (strain ATCC BAA-588 / NCTC 13252 / RB50) (Alcaligenes bronchisepticus).